Consider the following 47-residue polypeptide: PhoP/PhoQ regulator MgrB (47 aa).

A helical transmembrane segment spans residues 6 to 26 (WVILIIVLIACVILWTQTINV).

Belongs to the MgrB family. May form homooligomers. Probably interacts with the periplasmic domain of PhoQ.

The protein localises to the cell inner membrane. PhoP-regulated transcription is redox-sensitive, being activated when the periplasm becomes more reducing. MgrB acts between DsbA/DsbB and PhoP/PhoQ in this pathway. Represses PhoP/PhoQ signaling, possibly by binding to the periplasmic domain of PhoQ, altering its activity and that of downstream effector PhoP. The chain is PhoP/PhoQ regulator MgrB from Enterobacter sp. (strain 638).